The chain runs to 698 residues: PWWP domain-containing DNA repair factor 3A (698 aa).

Disordered stretches follow at residues 102–145 (TSLS…EDDQ) and 159–386 (CSPK…EEPP). Residue Ser105 is modified to Phosphoserine. Residues 129–139 (SQVSSAPSPSF) show a composition bias toward polar residues. Phosphoserine occurs at positions 165, 168, and 170. Residues 200–211 (DESQNGSGSQLD) show a composition bias toward polar residues. Basic and acidic residues-rich tracts occupy residues 212–235 (HGQE…RGKA) and 341–350 (RAGDSDRPEE). Residues Ser355 and Ser356 each carry the phosphoserine modification. Acidic residues predominate over residues 370 to 384 (EEEEEEEEEEEEEEE). Residues 399-460 (VGMLVWLKYQ…KHFDCKEKHA (62 aa)) enclose the PWWP domain.

The protein belongs to the PWWP3A family. Interacts with TP53BP1 (via BRCT domain); the interaction is not dependent on its phosphorylation status. Binds nucleosomes. Interacts with trimethylated 'Lys-36' of histone H3 (H3K36me3) (in vitro).

Its subcellular location is the nucleus. Functionally, involved in the DNA damage response pathway by contributing to the maintenance of chromatin architecture. Recruited to the vicinity of DNA breaks by TP53BP1 and plays an accessory role to facilitate damage-induced chromatin changes and promoting chromatin relaxation. Required for efficient DNA repair and cell survival following DNA damage. In Rattus norvegicus (Rat), this protein is PWWP domain-containing DNA repair factor 3A.